The chain runs to 542 residues: MNKPFLILLIALIVFSGCNMRKYFKPAKHQIKGEAYFPNHLQESIVSSNRYGAILKNGAVIGDKGLTQLRIGKNFNYESSFLNESQGFFILAQDCLNKIDKKTNKSKVAKTEETELKLKGVEAEVQDKVCHQVELISNNPNASQQSIVIPLETFALSASVKGNLLAVVLADNSANLYDITSQKLLFSEKGSPSTTINSLMAMPIFMDTVVVFPMLDGRLLVVDYVHGNPTPIRNIVISSDKFFNNITYLIVDGNNMIASTGKRILSVVSGQEFNYDGDIVDLLYDKGTLYVLTLDGQILQMDKSLRELNSVKLPSSLNTIVLNHNKLYSLEKRGYVIEVDLNDFDSYNVYKTPTIGSFKFFSSNRLDKGVFYDKNRVYYDRYYLDYNDFKPKLYPVVEKSASKKSQKGEKGNAPIYLQERHKAKENKQPLEENKVKPRNSGFEEEEVKTRRPEPIRDQNNATQQGETKNNESKNAPVLKENAAKKEVPKPNSKEEKRRLKEEKKKAKAEQRAREFEQRAREHQERDEKELEERRKALEMNKK.

The segment at 399-542 (KSASKKSQKG…RRKALEMNKK (144 aa)) is disordered. 2 stretches are compositionally biased toward basic and acidic residues: residues 418–435 (QERH…ENKV) and 447–456 (VKTRRPEPIR). Residues 457-467 (DQNNATQQGET) are compositionally biased toward polar residues. The span at 481–542 (NAAKKEVPKP…RRKALEMNKK (62 aa)) shows a compositional bias: basic and acidic residues.

It localises to the cell surface. Its function is as follows. Binds plasminogen, specifically, and in a concentration and lysine-dependent manner. Plasminogen is the precursor of plasmin, a serine protease that cleaves fibrin, fibronectin, laminin and vitronectin. Acquisition of plasminogen/plasmin could enable H.pylori to degrade host components. This is Plasminogen-binding protein PgbB (pgbB) from Helicobacter pylori (strain ATCC 700392 / 26695) (Campylobacter pylori).